Consider the following 47-residue polypeptide: PhoP/PhoQ regulator MgrB (47 aa).

A helical membrane pass occupies residues 6–26 (WVILIIVLIACVILWTQTINV).

Belongs to the MgrB family. May form homooligomers. Probably interacts with the periplasmic domain of PhoQ.

It is found in the cell inner membrane. PhoP-regulated transcription is redox-sensitive, being activated when the periplasm becomes more reducing. MgrB acts between DsbA/DsbB and PhoP/PhoQ in this pathway. Represses PhoP/PhoQ signaling, possibly by binding to the periplasmic domain of PhoQ, altering its activity and that of downstream effector PhoP. The sequence is that of PhoP/PhoQ regulator MgrB from Enterobacter sp. (strain 638).